A 146-amino-acid polypeptide reads, in one-letter code: Cytidine deaminase (146 aa).

Positions 13-140 constitute a CMP/dCMP-type deaminase domain; the sequence is ECVQQLLVCS…ELLPSSFGPE (128 aa). 54 to 60 provides a ligand contact to substrate; that stretch reads NIENACY. Cys65 lines the Zn(2+) pocket. Catalysis depends on Glu67, which acts as the Proton donor. Zn(2+) is bound by residues Cys99 and Cys102.

This sequence belongs to the cytidine and deoxycytidylate deaminase family. As to quaternary structure, homotetramer. Requires Zn(2+) as cofactor. Highly expressed in granulocytes while expression is very low in fibroblasts, chondrocytes, monocytes, and T- as well as B-cell lines.

It carries out the reaction cytidine + H2O + H(+) = uridine + NH4(+). The catalysed reaction is 2'-deoxycytidine + H2O + H(+) = 2'-deoxyuridine + NH4(+). Functionally, this enzyme scavenges exogenous and endogenous cytidine and 2'-deoxycytidine for UMP synthesis. The protein is Cytidine deaminase of Homo sapiens (Human).